A 688-amino-acid chain; its full sequence is Elongation factor G (688 aa).

The 275-residue stretch at 8–282 (EKTRNIGIIA…AIVDYLPAPC (275 aa)) folds into the tr-type G domain. GTP-binding positions include 17-24 (AHIDAGKT), 81-85 (DTPGH), and 135-138 (NKMD).

It belongs to the TRAFAC class translation factor GTPase superfamily. Classic translation factor GTPase family. EF-G/EF-2 subfamily.

The protein localises to the cytoplasm. Catalyzes the GTP-dependent ribosomal translocation step during translation elongation. During this step, the ribosome changes from the pre-translocational (PRE) to the post-translocational (POST) state as the newly formed A-site-bound peptidyl-tRNA and P-site-bound deacylated tRNA move to the P and E sites, respectively. Catalyzes the coordinated movement of the two tRNA molecules, the mRNA and conformational changes in the ribosome. The protein is Elongation factor G of Onion yellows phytoplasma (strain OY-M).